The sequence spans 67 residues: Gallinacin-6 (67 aa).

An N-terminal signal peptide occupies residues 1–19; sequence MRILYLLLSVLFVVLQGVA. Residues 20-25 constitute a propeptide that is removed on maturation; the sequence is GQPYFS. 3 disulfide bridges follow: Cys31–Cys60, Cys38–Cys53, and Cys43–Cys61.

This sequence belongs to the beta-defensin family. Expressed in bone marrow, testis, ovary, lung and trachea. Expressed in the ovarian stroma, but not in the ovarian follicles.

It localises to the secreted. It is found in the cytoplasmic granule. Its function is as follows. Has bactericidal activity. Potent activity against S.typhimurium and S.entiriditis. The protein is Gallinacin-6 (GAL6) of Gallus gallus (Chicken).